Here is a 204-residue protein sequence, read N- to C-terminus: MRLPDPYTNPEYPGLGFESVNLVDNDPMIRDELPNGKVKEVKISAQYWGINISYPELFPDEYAFLDSRLLEYKRTGDYLDVLLPQYEAFRVRGDTKSVTIPAGQKGSQIILNTNGTLTGQPKAGDLFKLSTHPKVYKITNFSSSGNVWNISLYPDLFITTTGSEKPVFNGILFRTKLMNGDSFGSTLNNNGTYSGISLSLRESL.

Homohexamer. Interacts with baseplate tube protein p140 and baseplate hub protein pb3.

Its subcellular location is the virion. In terms of biological role, forms the simplified baseplate, together with the p132 collar protein, the baseplate tube protein p140 and baseplate hub protein pb3. The chain is Distal tail protein pb9 (D16) from Escherichia phage T5 (Enterobacteria phage T5).